Here is a 275-residue protein sequence, read N- to C-terminus: 2,3,4,5-tetrahydropyridine-2,6-dicarboxylate N-succinyltransferase (275 aa).

R105 and D142 together coordinate substrate.

Belongs to the transferase hexapeptide repeat family. Homotrimer.

It is found in the cytoplasm. It catalyses the reaction (S)-2,3,4,5-tetrahydrodipicolinate + succinyl-CoA + H2O = (S)-2-succinylamino-6-oxoheptanedioate + CoA. The protein operates within amino-acid biosynthesis; L-lysine biosynthesis via DAP pathway; LL-2,6-diaminopimelate from (S)-tetrahydrodipicolinate (succinylase route): step 1/3. This chain is 2,3,4,5-tetrahydropyridine-2,6-dicarboxylate N-succinyltransferase, found in Pectobacterium atrosepticum (strain SCRI 1043 / ATCC BAA-672) (Erwinia carotovora subsp. atroseptica).